The sequence spans 495 residues: UPF0371 protein CE2832 (495 aa).

The protein belongs to the UPF0371 family.

The sequence is that of UPF0371 protein CE2832 from Corynebacterium efficiens (strain DSM 44549 / YS-314 / AJ 12310 / JCM 11189 / NBRC 100395).